The chain runs to 355 residues: N-acetyl-gamma-glutamyl-phosphate reductase (355 aa).

Residue Cys152 is part of the active site.

Belongs to the NAGSA dehydrogenase family. Type 1 subfamily.

The protein localises to the cytoplasm. The enzyme catalyses N-acetyl-L-glutamate 5-semialdehyde + phosphate + NADP(+) = N-acetyl-L-glutamyl 5-phosphate + NADPH + H(+). The protein operates within amino-acid biosynthesis; L-arginine biosynthesis; N(2)-acetyl-L-ornithine from L-glutamate: step 3/4. Catalyzes the NADPH-dependent reduction of N-acetyl-5-glutamyl phosphate to yield N-acetyl-L-glutamate 5-semialdehyde. This is N-acetyl-gamma-glutamyl-phosphate reductase from Psychrobacter sp. (strain PRwf-1).